We begin with the raw amino-acid sequence, 224 residues long: EF-hand calcium-binding domain-containing protein 1 (224 aa).

The signal sequence occupies residues 1–21 (MKVSLLLLALVLVCLVQGSES). One can recognise an EF-hand domain in the interval 115–150 (IAHPDFMKAYSIADVDGDGELSPKEFYNGPYVFEMD). The Ca(2+) site is built by aspartate 128, aspartate 130, aspartate 132, glutamate 134, and glutamate 139.

Component of the acid-soluble organic matrix of calcified layers of the shell (at protein level).

It localises to the secreted. This is EF-hand calcium-binding domain-containing protein 1 from Lottia gigantea (Giant owl limpet).